Reading from the N-terminus, the 479-residue chain is ATP synthase subunit beta (479 aa).

ATP is bound at residue 153 to 160 (GGAGVGKT).

This sequence belongs to the ATPase alpha/beta chains family. As to quaternary structure, F-type ATPases have 2 components, CF(1) - the catalytic core - and CF(0) - the membrane proton channel. CF(1) has five subunits: alpha(3), beta(3), gamma(1), delta(1), epsilon(1). CF(0) has three main subunits: a(1), b(2) and c(9-12). The alpha and beta chains form an alternating ring which encloses part of the gamma chain. CF(1) is attached to CF(0) by a central stalk formed by the gamma and epsilon chains, while a peripheral stalk is formed by the delta and b chains.

Its subcellular location is the cell membrane. The catalysed reaction is ATP + H2O + 4 H(+)(in) = ADP + phosphate + 5 H(+)(out). Produces ATP from ADP in the presence of a proton gradient across the membrane. The catalytic sites are hosted primarily by the beta subunits. This Lactobacillus delbrueckii subsp. bulgaricus (strain ATCC 11842 / DSM 20081 / BCRC 10696 / JCM 1002 / NBRC 13953 / NCIMB 11778 / NCTC 12712 / WDCM 00102 / Lb 14) protein is ATP synthase subunit beta.